The primary structure comprises 494 residues: Cytochrome P450 2A8 (494 aa).

Heme is bound at residue C439.

It belongs to the cytochrome P450 family. It depends on heme as a cofactor. As to expression, liver.

The protein localises to the endoplasmic reticulum membrane. Its subcellular location is the microsome membrane. The catalysed reaction is an organic molecule + reduced [NADPH--hemoprotein reductase] + O2 = an alcohol + oxidized [NADPH--hemoprotein reductase] + H2O + H(+). Its function is as follows. Highly active in 7-ethoxycoumarin O-deethylation, and benzphetamine N-demethylation; moderately active in testosterone 7-alpha-hydroxylation, ethylmorphine N-demethylation, p-nitroanisole O-demethylation; and only slightly active in benzopyrene 3-hydroxylation, 7-ethoxyresorufin O-deethylation, testosterone 2-alpha-hydroxylation and testosterone 17-oxidation. Competent in the metabolic activation of aflatoxin B1. The protein is Cytochrome P450 2A8 (CYP2A8) of Mesocricetus auratus (Golden hamster).